Reading from the N-terminus, the 315-residue chain is Transaldolase (315 aa).

The active-site Schiff-base intermediate with substrate is the Lys125.

This sequence belongs to the transaldolase family. Type 1 subfamily. In terms of assembly, homodimer.

It localises to the cytoplasm. The enzyme catalyses D-sedoheptulose 7-phosphate + D-glyceraldehyde 3-phosphate = D-erythrose 4-phosphate + beta-D-fructose 6-phosphate. It functions in the pathway carbohydrate degradation; pentose phosphate pathway; D-glyceraldehyde 3-phosphate and beta-D-fructose 6-phosphate from D-ribose 5-phosphate and D-xylulose 5-phosphate (non-oxidative stage): step 2/3. Functionally, transaldolase is important for the balance of metabolites in the pentose-phosphate pathway. This is Transaldolase from Paracidovorax citrulli (strain AAC00-1) (Acidovorax citrulli).